The primary structure comprises 41 residues: Large ribosomal subunit protein bL36 (41 aa).

It belongs to the bacterial ribosomal protein bL36 family.

The polypeptide is Large ribosomal subunit protein bL36 (Bradyrhizobium diazoefficiens (strain JCM 10833 / BCRC 13528 / IAM 13628 / NBRC 14792 / USDA 110)).